Reading from the N-terminus, the 289-residue chain is MAPKKRSSRGTRTNTLRSRKLASFLKDFDREVQVRTKQIESDRQTLLKEVENLYNIEILRLPKALQGMKWLDYFALGGNKQALEEAAKADRDITEINNLTAEAIQTPLKSVKKRKVIEVEESIKEEEEEEEEGGGGGGRTKKSHKNLRSAKVKRCLPSKKRTQSIQGRGRSKRLSHDFVTPAMSRLEPSLVKPTPGMTPRFDSRVFKTPGLRTPAAKEQVYNISINGSPLADSKEISLSVPIGGGASLRLLASDLQRIDIAQLNPEALGNIRKLSSRLAQICSSIRTGR.

The required for interaction with INCENP stretch occupies residues 1-58; the sequence is MAPKKRSSRGTRTNTLRSRKLASFLKDFDREVQVRTKQIESDRQTLLKEVENLYNIEI. The segment at 1–88 is required for centromere localization; sequence MAPKKRSSRG…NKQALEEAAK (88 aa). The tract at residues 1–150 is required for interaction with SENP3; it reads MAPKKRSSRG…KKSHKNLRSA (150 aa). Residues 10 to 109 are required to form a minimal CPC core complex that localizes to the central spindle and midbody and properly executes the role of the CPC during cytokinesis; sequence GTRTNTLRSR…TAEAIQTPLK (100 aa). Residues 20 to 78 are required for interaction with INCENP and BIRC5; that stretch reads KLASFLKDFDREVQVRTKQIESDRQTLLKEVENLYNIEILRLPKALQGMKWLDYFALGG. The residue at position 91 (Arg91) is a Citrulline. Residue Thr94 is modified to Phosphothreonine; by TTK. Residue Thr106 is modified to Phosphothreonine. Phosphoserine is present on Ser110. The disordered stretch occupies residues 122–173; that stretch reads SIKEEEEEEEEGGGGGGRTKKSHKNLRSAKVKRCLPSKKRTQSIQGRGRSKR. A compositionally biased stretch (acidic residues) spans 123 to 133; sequence IKEEEEEEEEG. The span at 139 to 162 shows a compositional bias: basic residues; sequence RTKKSHKNLRSAKVKRCLPSKKRT. Lys145 is covalently cross-linked (Glycyl lysine isopeptide (Lys-Gly) (interchain with G-Cter in SUMO2)). Ser175 bears the Phosphoserine mark. 2 positions are modified to phosphothreonine: Thr198 and Thr213. Ser228, Ser233, Ser247, and Ser253 each carry phosphoserine.

This sequence belongs to the borealin family. In terms of assembly, may form homooligomers and homodimers. Component of the chromosomal passenger complex (CPC) composed of at least BIRC5/survivin, CDCA8/borealin, INCENP, AURKB or AURKC; in the complex forms a triple-helix bundle-based subcomplex with INCENP and BIRC5. Interacts with SENP3, UBE2I and RANBP2. Interacts (phosphorylated) with SGO1 and SGO2A; the association is dependent on CDK1. Phosphorylated by TTK, essentially at Thr-94. Phosphorylation (probably by CDK1) promotes targeting of the CPC to centromeric DNA. Post-translationally, sumoylated by UBE2I and RANBP2. Desumoylated by SENP3 through the removal of SUMO2 and SUMO3. In terms of processing, citrullinated by PADI4.

It localises to the nucleus. It is found in the nucleolus. The protein resides in the cytoplasm. The protein localises to the chromosome. Its subcellular location is the centromere. It localises to the cytoskeleton. It is found in the spindle. In terms of biological role, component of the chromosomal passenger complex (CPC), a complex that acts as a key regulator of mitosis. The CPC complex has essential functions at the centromere in ensuring correct chromosome alignment and segregation and is required for chromatin-induced microtubule stabilization and spindle assembly. In the complex, it may be required to direct the CPC to centromeric DNA. Major effector of the TTK kinase in the control of attachment-error-correction and chromosome alignment. This chain is Borealin (Cdca8), found in Mus musculus (Mouse).